The sequence spans 196 residues: Pro-FMRFamide-related neuropeptide VF (196 aa).

A signal peptide spans 1-21; it reads MEIISLKRFILLMLATSSLLT. The propeptide occupies 22–57; the sequence is SNIFCTDESRIPSLYSKKNYDKYSEPRGDLGWEKER. Phenylalanine amide is present on Phe92. 2 consecutive propeptides follow at residues 95 to 99 and 115 to 121; these read NMEEE and NREDSLS. Phe131 is modified (phenylalanine amide). The propeptide occupies 134–196; the sequence is TIAAKSITKT…IDDAELKQEK (63 aa).

This sequence belongs to the FARP (FMRFamide related peptide) family. Expressed in hypothalamus, where it is localized to the dorsomedial hypothalamic nucleus (DMH), paraventricular nucleus (PVN), and to neuronal projections from the PVN to the neurosecretory zone of the median eminence.

It is found in the secreted. Its function is as follows. May act in concert with kisspeptin, through opposing affects, to regulate the activity of gonadotropin-releasing hormone (GnRH) neurons across the seasons, leading to an annual change in fertility and the cyclical seasonal transition from non-breeding to breeding season. Functionally, efficiently inhibits forskolin-induced production of cAMP. Acts as a potent negative regulator of gonadotropin synthesis and secretion. Induces secretion of prolactin. Efficiently inhibits forskolin-induced production of cAMP. Blocks morphine-induced analgesia. In terms of biological role, shows no inhibitory activity of forskolin-induced production of cAMP. The sequence is that of Pro-FMRFamide-related neuropeptide VF from Ovis aries (Sheep).